A 940-amino-acid chain; its full sequence is Valine--tRNA ligase (940 aa).

Residues 47–57 carry the 'HIGH' region motif; it reads PNVTGILHMGH. Residues 564–568 carry the 'KMSKS' region motif; the sequence is KLSKS. Lysine 567 contributes to the ATP binding site. A coiled-coil region spans residues 872–938; that stretch reads PIEQITKEKN…LQSILDKLAS (67 aa).

It belongs to the class-I aminoacyl-tRNA synthetase family. ValS type 1 subfamily. Monomer.

Its subcellular location is the cytoplasm. The enzyme catalyses tRNA(Val) + L-valine + ATP = L-valyl-tRNA(Val) + AMP + diphosphate. In terms of biological role, catalyzes the attachment of valine to tRNA(Val). As ValRS can inadvertently accommodate and process structurally similar amino acids such as threonine, to avoid such errors, it has a 'posttransfer' editing activity that hydrolyzes mischarged Thr-tRNA(Val) in a tRNA-dependent manner. The polypeptide is Valine--tRNA ligase (Chlamydia felis (strain Fe/C-56) (Chlamydophila felis)).